A 151-amino-acid chain; its full sequence is Acidic phospholipase A2 4 (151 aa).

Residues 1 to 27 form the signal peptide; it reads MYPAHLLVLLAVCVSLLGAASIPARPL. Cystine bridges form between Cys-38–Cys-104, Cys-54–Cys-151, Cys-56–Cys-72, Cys-71–Cys-132, Cys-78–Cys-125, Cys-88–Cys-118, and Cys-111–Cys-123. Residues Tyr-55, Gly-57, and Gly-59 each coordinate Ca(2+). His-75 is a catalytic residue. Asp-76 provides a ligand contact to Ca(2+). Residue Asp-126 is part of the active site.

It belongs to the phospholipase A2 family. Group I subfamily. D49 sub-subfamily. It depends on Ca(2+) as a cofactor. Expressed by the venom gland.

The protein resides in the secreted. It carries out the reaction a 1,2-diacyl-sn-glycero-3-phosphocholine + H2O = a 1-acyl-sn-glycero-3-phosphocholine + a fatty acid + H(+). PLA2 catalyzes the calcium-dependent hydrolysis of the 2-acyl groups in 3-sn-phosphoglycerides. This Tropidechis carinatus (Australian rough-scaled snake) protein is Acidic phospholipase A2 4.